The primary structure comprises 211 residues: Small ribosomal subunit protein uS3 (211 aa).

In terms of domain architecture, KH type-2 spans 38 to 106; sequence LRSFVKKTFH…DVELHIVEVK (69 aa).

It belongs to the universal ribosomal protein uS3 family. In terms of assembly, part of the 30S ribosomal subunit. Forms a tight complex with proteins S10 and S14.

Binds the lower part of the 30S subunit head. Binds mRNA in the 70S ribosome, positioning it for translation. In Anaplasma marginale (strain Florida), this protein is Small ribosomal subunit protein uS3.